Reading from the N-terminus, the 365-residue chain is Class I histocompatibility antigen, Gogo-C*0101/C*0102 alpha chain (365 aa).

The first 24 residues, 1 to 24 (MRVMAPRTLILLLSGALALTETWA), serve as a signal peptide directing secretion. Residues 25–114 (GSHSMRYFFT…LRGYYNQSED (90 aa)) are alpha-1. Residues 25–308 (GSHSMRYFFT…EPSSQPTIPI (284 aa)) lie on the Extracellular side of the membrane. An N-linked (GlcNAc...) asparagine glycan is attached at N110. An alpha-2 region spans residues 115-206 (GSHTFQRMYG…ENGKETLQRA (92 aa)). Intrachain disulfides connect C125–C188 and C227–C283. The alpha-3 stretch occupies residues 207–298 (DPPKTHVTHH…GLLEPLTLRW (92 aa)). Residues 209 to 297 (PKTHVTHHPI…KGLLEPLTLR (89 aa)) form the Ig-like C1-type domain. A connecting peptide region spans residues 299 to 308 (EPSSQPTIPI). The chain crosses the membrane as a helical span at residues 309-332 (VGIVAGLAVLAVVFTGTVVAAVMC). Topologically, residues 333 to 365 (RRKSSGGKGGSCSQAACSNSAQGSDESLIACKA) are cytoplasmic. 2 positions are modified to phosphoserine: S356 and S359.

It belongs to the MHC class I family. In terms of assembly, heterodimer of an alpha chain and a beta chain (beta-2-microglobulin).

The protein resides in the membrane. Involved in the presentation of foreign antigens to the immune system. This Gorilla gorilla gorilla (Western lowland gorilla) protein is Class I histocompatibility antigen, Gogo-C*0101/C*0102 alpha chain.